The chain runs to 518 residues: Protein translocase subunit SecD (518 aa).

6 helical membrane-spanning segments follow: residues 9–29 (IVLS…NFIQ), 356–376 (GKKA…LSYG), 377–397 (VIGL…LALL), 406–426 (LPGI…NVLI), 451–473 (AFAT…YIFG), and 486–506 (IGII…IDIW).

Belongs to the SecD/SecF family. SecD subfamily. In terms of assembly, forms a complex with SecF. Part of the essential Sec protein translocation apparatus which comprises SecA, SecYEG and auxiliary proteins SecDF-YajC and YidC.

The protein resides in the cell inner membrane. Functionally, part of the Sec protein translocase complex. Interacts with the SecYEG preprotein conducting channel. SecDF uses the proton motive force (PMF) to complete protein translocation after the ATP-dependent function of SecA. This Rickettsia typhi (strain ATCC VR-144 / Wilmington) protein is Protein translocase subunit SecD.